We begin with the raw amino-acid sequence, 406 residues long: NADH-ubiquinone oxidoreductase 49 kDa subunit (406 aa).

It belongs to the complex I 49 kDa subunit family. Complex I is composed of 45 different subunits. Component of the iron-sulfur (IP) fragment of the enzyme.

It is found in the mitochondrion inner membrane. It carries out the reaction a ubiquinone + NADH + 5 H(+)(in) = a ubiquinol + NAD(+) + 4 H(+)(out). Functionally, core subunit of the mitochondrial membrane respiratory chain NADH dehydrogenase (Complex I) that is believed to belong to the minimal assembly required for catalysis. Complex I functions in the transfer of electrons from NADH to the respiratory chain. The immediate electron acceptor for the enzyme is believed to be ubiquinone. The chain is NADH-ubiquinone oxidoreductase 49 kDa subunit (nad7) from Dictyostelium discoideum (Social amoeba).